We begin with the raw amino-acid sequence, 225 residues long: tRNA (guanine-N(1)-)-methyltransferase (225 aa).

S-adenosyl-L-methionine contacts are provided by residues Gly-112 and 132–137 (IGDYVL).

It belongs to the RNA methyltransferase TrmD family. As to quaternary structure, homodimer.

The protein localises to the cytoplasm. The catalysed reaction is guanosine(37) in tRNA + S-adenosyl-L-methionine = N(1)-methylguanosine(37) in tRNA + S-adenosyl-L-homocysteine + H(+). In terms of biological role, specifically methylates guanosine-37 in various tRNAs. In Bacteroides thetaiotaomicron (strain ATCC 29148 / DSM 2079 / JCM 5827 / CCUG 10774 / NCTC 10582 / VPI-5482 / E50), this protein is tRNA (guanine-N(1)-)-methyltransferase.